The following is a 644-amino-acid chain: Macrolide export ATP-binding/permease protein MacB (644 aa).

Positions 6 to 244 (LELDGVWRRF…SQATEAQPDG (239 aa)) constitute an ABC transporter domain. 42–49 (GASGSGKS) is a binding site for ATP. 5 helical membrane passes run 271-291 (ALTM…IAIG), 415-435 (EAVG…GVVA), 517-537 (LSLL…IGVM), 574-594 (LVCL…SFVF), and 609-629 (VIAL…FLPA).

This sequence belongs to the ABC transporter superfamily. Macrolide exporter (TC 3.A.1.122) family. As to quaternary structure, homodimer.

It localises to the cell inner membrane. Functionally, non-canonical ABC transporter that contains transmembrane domains (TMD), which form a pore in the inner membrane, and an ATP-binding domain (NBD), which is responsible for energy generation. Confers resistance against macrolides. The sequence is that of Macrolide export ATP-binding/permease protein MacB from Chromobacterium violaceum (strain ATCC 12472 / DSM 30191 / JCM 1249 / CCUG 213 / NBRC 12614 / NCIMB 9131 / NCTC 9757 / MK).